A 377-amino-acid polypeptide reads, in one-letter code: tRNA(Met) cytidine acetate ligase (377 aa).

ATP-binding positions include 7–20 (ITEYNPFHNGHLYH), Gly101, Asn152, and Arg179.

This sequence belongs to the TmcAL family.

The protein localises to the cytoplasm. The catalysed reaction is cytidine(34) in elongator tRNA(Met) + acetate + ATP = N(4)-acetylcytidine(34) in elongator tRNA(Met) + AMP + diphosphate. Its function is as follows. Catalyzes the formation of N(4)-acetylcytidine (ac(4)C) at the wobble position of elongator tRNA(Met), using acetate and ATP as substrates. First activates an acetate ion to form acetyladenylate (Ac-AMP) and then transfers the acetyl group to tRNA to form ac(4)C34. This is tRNA(Met) cytidine acetate ligase from Oenococcus oeni (strain ATCC BAA-331 / PSU-1).